The following is a 336-amino-acid chain: Ornithine carbamoyltransferase, catabolic (336 aa).

Carbamoyl phosphate-binding positions include 57–60 (STRT), Q84, R108, and 135–138 (HPTQ). L-ornithine-binding positions include N168, D232, and 236–237 (SM). Residues 274–275 (CL) and R321 contribute to the carbamoyl phosphate site.

This sequence belongs to the aspartate/ornithine carbamoyltransferase superfamily. OTCase family.

Its subcellular location is the cytoplasm. The enzyme catalyses carbamoyl phosphate + L-ornithine = L-citrulline + phosphate + H(+). The protein operates within amino-acid degradation; L-arginine degradation via ADI pathway; carbamoyl phosphate from L-arginine: step 2/2. Functionally, reversibly catalyzes the transfer of the carbamoyl group from carbamoyl phosphate (CP) to the N(epsilon) atom of ornithine (ORN) to produce L-citrulline. The chain is Ornithine carbamoyltransferase, catabolic (arcB) from Ectopseudomonas mendocina (Pseudomonas mendocina).